The primary structure comprises 293 residues: Large ribosomal subunit protein uL4 (293 aa).

Composition is skewed to basic and acidic residues over residues 1-14 (MAEE…EKTP) and 33-55 (KTTE…ESTK). 2 disordered regions span residues 1 to 72 (MAEE…IKSE) and 130 to 166 (QRQG…STRS).

The protein belongs to the universal ribosomal protein uL4 family. Part of the 50S ribosomal subunit.

Functionally, one of the primary rRNA binding proteins, this protein initially binds near the 5'-end of the 23S rRNA. It is important during the early stages of 50S assembly. It makes multiple contacts with different domains of the 23S rRNA in the assembled 50S subunit and ribosome. In terms of biological role, forms part of the polypeptide exit tunnel. The chain is Large ribosomal subunit protein uL4 from Mycoplasma mobile (strain ATCC 43663 / 163K / NCTC 11711) (Mesomycoplasma mobile).